We begin with the raw amino-acid sequence, 359 residues long: Peptide chain release factor 1 (359 aa).

Gln236 carries the post-translational modification N5-methylglutamine.

Belongs to the prokaryotic/mitochondrial release factor family. Post-translationally, methylated by PrmC. Methylation increases the termination efficiency of RF1.

The protein localises to the cytoplasm. Peptide chain release factor 1 directs the termination of translation in response to the peptide chain termination codons UAG and UAA. The protein is Peptide chain release factor 1 of Malacoplasma penetrans (strain HF-2) (Mycoplasma penetrans).